The primary structure comprises 281 residues: Protoheme IX farnesyltransferase (281 aa).

Helical transmembrane passes span 13–33 (VIWLLVLSALVGYIAAAGPLV), 38–58 (LIELTVVGFLSTGGSAAFNMY), 85–105 (ALTFSIAVSLSGFTLSYLWLG), 107–127 (WVTLMIALGWFFYAVLYTIML), 132–152 (WLNIVIGGFAGNAALLSGWIM), 161–181 (ILLSMVIYVWIPAHIWSLAYY), 206–226 (IISILNLVSIIYMLVLYQLYM), 227–247 (AKLIGYILVIPATLAGIIVTI), and 261–281 (MFKATSPILLLFLLAVIISRI).

Belongs to the UbiA prenyltransferase family. Protoheme IX farnesyltransferase subfamily.

The protein localises to the cell membrane. The catalysed reaction is heme b + (2E,6E)-farnesyl diphosphate + H2O = Fe(II)-heme o + diphosphate. It functions in the pathway porphyrin-containing compound metabolism; heme O biosynthesis; heme O from protoheme: step 1/1. Its function is as follows. Converts heme B (protoheme IX) to heme O by substitution of the vinyl group on carbon 2 of heme B porphyrin ring with a hydroxyethyl farnesyl side group. This chain is Protoheme IX farnesyltransferase, found in Caldivirga maquilingensis (strain ATCC 700844 / DSM 13496 / JCM 10307 / IC-167).